Consider the following 423-residue polypeptide: Kynurenine--oxoglutarate transaminase 1 (423 aa).

Residue G36 participates in substrate binding. Residue K82 is modified to N6-succinyllysine. N185 provides a ligand contact to substrate. K247 is modified (N6-(pyridoxal phosphate)lysine). Residue R398 participates in substrate binding.

It belongs to the class-I pyridoxal-phosphate-dependent aminotransferase family. As to quaternary structure, homodimer. The cofactor is pyridoxal 5'-phosphate. As to expression, detected in kidney.

It localises to the cytoplasm. The protein localises to the cytosol. The protein resides in the mitochondrion matrix. It catalyses the reaction L-kynurenine + 2-oxoglutarate = kynurenate + L-glutamate + H2O. It carries out the reaction 3-phenylpyruvate + L-glutamine = 2-oxoglutaramate + L-phenylalanine. The catalysed reaction is an S-substituted L-cysteine + H2O = a thiol + pyruvate + NH4(+). It functions in the pathway amino-acid degradation; L-kynurenine degradation; kynurenate from L-kynurenine: step 1/2. Its activity is regulated as follows. Inhibited by aminooxyacetate (in vitro). Catalyzes the irreversible transamination of the L-tryptophan metabolite L-kynurenine to form kynurenic acid (KA), an intermediate in the tryptophan catabolic pathway which is also a broad spectrum antagonist of the three ionotropic excitatory amino acid receptors among others. Metabolizes the cysteine conjugates of certain halogenated alkenes and alkanes to form reactive metabolites. Catalyzes the beta-elimination of S-conjugates and Se-conjugates of L-(seleno)cysteine, resulting in the cleavage of the C-S or C-Se bond. This Rattus norvegicus (Rat) protein is Kynurenine--oxoglutarate transaminase 1.